Here is a 274-residue protein sequence, read N- to C-terminus: Non-homologous end joining protein Ku (274 aa).

The 185-residue stretch at 11 to 195 folds into the Ku domain; the sequence is ITFGLVNVPV…KYKITPKELS (185 aa).

The protein belongs to the prokaryotic Ku family. Homodimer. Interacts with LigD.

In terms of biological role, with LigD forms a non-homologous end joining (NHEJ) DNA repair enzyme, which repairs dsDNA breaks with reduced fidelity. Binds linear dsDNA with 5'- and 3'- overhangs but not closed circular dsDNA nor ssDNA. Recruits and stimulates the ligase activity of LigD. This is Non-homologous end joining protein Ku from Coxiella burnetii (strain RSA 331 / Henzerling II).